The following is a 620-amino-acid chain: Glutathione-regulated potassium-efflux system protein KefC (620 aa).

The Periplasmic portion of the chain corresponds to 1–3 (MDS). The chain crosses the membrane as a helical span at residues 4-24 (HTLVQALIYLGSAALIVPIAV). A topological domain (cytoplasmic) is located at residue arginine 25. A helical transmembrane segment spans residues 26-46 (LGLGSVLGYLIAGCIIGPWGL). The Periplasmic portion of the chain corresponds to 47–53 (RLVTDAE). A helical membrane pass occupies residues 54 to 74 (SILHFAEIGVVLMLFIIGLEL). The Cytoplasmic segment spans residues 75-89 (DPQRLWKLRAAVFGG). A helical transmembrane segment spans residues 90–110 (GALQMVICGGLLGLFCMLLGL). At 111–113 (RWQ) the chain is on the periplasmic side. A helical transmembrane segment spans residues 114–134 (VAELIGMTLALSSTAIAMQAM). The Cytoplasmic segment spans residues 135–148 (NERNLMVTQMGRSA). Residues 149 to 169 (FAVLLFQDIAAIPLVAMIPLL) traverse the membrane as a helical segment. Topologically, residues 170–177 (AASSASTT) are periplasmic. A helical membrane pass occupies residues 178-198 (MGAFALSALKVAGALVLVVLL). Residues 199–213 (GRYVTRPALRFVARS) lie on the Cytoplasmic side of the membrane. Residues 214–233 (GLREVFSAVALFLVFGFGLL) form a helical membrane-spanning segment. The Periplasmic portion of the chain corresponds to 234 to 236 (LEE). A helical transmembrane segment spans residues 237–254 (VGLSMAMGAFLAGVLLAS). Over 255-269 (SEYRHALESDIEPFK) the chain is Cytoplasmic. Residues 270–290 (GLLLGLFFIGVGMSIDFGTLI) form a helical membrane-spanning segment. At 291-293 (ENP) the chain is on the periplasmic side. Residues 294-314 (LRIVILLLGFLIIKIAMLWLI) traverse the membrane as a helical segment. The Cytoplasmic portion of the chain corresponds to 315 to 326 (ARPLQVPNKQRR). A helical transmembrane segment spans residues 327–347 (WFAVLLGQGSEFAFVVFGAAQ). Residues 348–358 (MANVLEPEWAK) are Periplasmic-facing. A helical transmembrane segment spans residues 359 to 379 (SLTLAVALSMAATPILLVILN). At 380–620 (RLEQSSTEEA…ADEPETKPSS (241 aa)) the chain is on the cytoplasmic side. Residues 399–518 (QPRVIIAGFG…AGVEKPERET (120 aa)) form the RCK N-terminal domain. The interval 597-620 (GWQGTEEGKHTGNMADEPETKPSS) is disordered.

It belongs to the monovalent cation:proton antiporter 2 (CPA2) transporter (TC 2.A.37) family. KefC subfamily. Homodimer. Interacts with the regulatory subunit KefF.

The protein localises to the cell inner membrane. Functionally, pore-forming subunit of a potassium efflux system that confers protection against electrophiles. Catalyzes K(+)/H(+) antiport. The protein is Glutathione-regulated potassium-efflux system protein KefC of Escherichia coli O157:H7.